The chain runs to 403 residues: Dynactin subunit 2-A (403 aa).

The segment at 1 to 26 (MADPKYADLPGIARNEPDVYETSDLP) is disordered. A coiled-coil region spans residues 99 to 132 (PQQKYQRLLHEVQELTQEVEKTQSTVKESAAEEK). Positions 183 to 203 (AAKTRKNPEGKSPAKGPGPDT) are disordered. Positions 381–401 (KENLATVEDNFSNIDGRIKKL) form a coiled coil.

This sequence belongs to the dynactin subunit 2 family. In terms of assembly, subunit of dynactin, a multiprotein complex part of a tripartite complex with dynein and a adapter, such as BICDL1, BICD2 or HOOK3. The dynactin complex is built around ACTR1A/ACTB filament and consists of an actin-related filament composed of a shoulder domain, a pointed end and a barbed end. Its length is defined by its flexible shoulder domain. The soulder is composed of 2 DCTN1 subunits, 4 DCTN2 and 2 DCTN3.

Its subcellular location is the cytoplasm. It is found in the cytoskeleton. The protein resides in the microtubule organizing center. The protein localises to the centrosome. It localises to the membrane. Part of the dynactin complex that activates the molecular motor dynein for ultra-processive transport along microtubules. In the dynactin soulder domain, binds the ACTR1A filament and acts as a molecular ruler to determine the length. Modulates cytoplasmic dynein binding to an organelle, and plays a role in prometaphase chromosome alignment and spindle organization during mitosis. Involved in anchoring microtubules to centrosomes. In Xenopus laevis (African clawed frog), this protein is Dynactin subunit 2-A (dctn2-a).